We begin with the raw amino-acid sequence, 259 residues long: Putative electron transfer flavoprotein subunit YgcR (259 aa).

Belongs to the ETF beta-subunit/FixA family. In terms of assembly, ygcQ and YgcR form a heterodimer.

In terms of biological role, may play a role in a redox process. The sequence is that of Putative electron transfer flavoprotein subunit YgcR (ygcR) from Escherichia coli (strain K12).